The chain runs to 231 residues: Sugar fermentation stimulation protein homolog (231 aa).

This sequence belongs to the SfsA family.

The sequence is that of Sugar fermentation stimulation protein homolog from Syntrophotalea carbinolica (strain DSM 2380 / NBRC 103641 / GraBd1) (Pelobacter carbinolicus).